Consider the following 177-residue polypeptide: Large ribosomal subunit protein uL6 (177 aa).

This sequence belongs to the universal ribosomal protein uL6 family. As to quaternary structure, part of the 50S ribosomal subunit.

Functionally, this protein binds to the 23S rRNA, and is important in its secondary structure. It is located near the subunit interface in the base of the L7/L12 stalk, and near the tRNA binding site of the peptidyltransferase center. The protein is Large ribosomal subunit protein uL6 of Allorhizobium ampelinum (strain ATCC BAA-846 / DSM 112012 / S4) (Agrobacterium vitis (strain S4)).